The primary structure comprises 522 residues: 2-isopropylmalate synthase (522 aa).

In terms of domain architecture, Pyruvate carboxyltransferase spans 5 to 267; the sequence is VIIFDTTLRD…DCGINAKEIH (263 aa). Aspartate 14, histidine 202, histidine 204, and asparagine 238 together coordinate Mn(2+). A regulatory domain region spans residues 392-522; that stretch reads QLQHMMVHSD…IHKERELGGV (131 aa).

Belongs to the alpha-IPM synthase/homocitrate synthase family. LeuA type 1 subfamily. As to quaternary structure, homodimer. Requires Mn(2+) as cofactor.

The protein resides in the cytoplasm. The catalysed reaction is 3-methyl-2-oxobutanoate + acetyl-CoA + H2O = (2S)-2-isopropylmalate + CoA + H(+). Its pathway is amino-acid biosynthesis; L-leucine biosynthesis; L-leucine from 3-methyl-2-oxobutanoate: step 1/4. In terms of biological role, catalyzes the condensation of the acetyl group of acetyl-CoA with 3-methyl-2-oxobutanoate (2-ketoisovalerate) to form 3-carboxy-3-hydroxy-4-methylpentanoate (2-isopropylmalate). The polypeptide is 2-isopropylmalate synthase (Shewanella frigidimarina (strain NCIMB 400)).